Reading from the N-terminus, the 151-residue chain is Putative pre-16S rRNA nuclease (151 aa).

This sequence belongs to the YqgF nuclease family.

It is found in the cytoplasm. Could be a nuclease involved in processing of the 5'-end of pre-16S rRNA. In Prochlorococcus marinus subsp. pastoris (strain CCMP1986 / NIES-2087 / MED4), this protein is Putative pre-16S rRNA nuclease.